Here is a 350-residue protein sequence, read N- to C-terminus: GTPase Obg (350 aa).

Residues 1–159 enclose the Obg domain; the sequence is MKLVDEAEIE…RTLKLELKLL (159 aa). Residues 127–147 form a disordered region; it reads NMHFKSSTNRSPRQALPGEPG. One can recognise an OBG-type G domain in the interval 160–337; sequence ADVGLLGFPN…IMSRIMAFFD (178 aa). GTP contacts are provided by residues 166–173, 191–195, 213–216, 287–290, and 318–320; these read GFPNAGKS, FTTLY, DIPG, NKAD, and SAL. 2 residues coordinate Mg(2+): Ser173 and Thr193.

The protein belongs to the TRAFAC class OBG-HflX-like GTPase superfamily. OBG GTPase family. In terms of assembly, monomer. It depends on Mg(2+) as a cofactor.

Its subcellular location is the cytoplasm. In terms of biological role, an essential GTPase which binds GTP, GDP and possibly (p)ppGpp with moderate affinity, with high nucleotide exchange rates and a fairly low GTP hydrolysis rate. Plays a role in control of the cell cycle, stress response, ribosome biogenesis and in those bacteria that undergo differentiation, in morphogenesis control. In Stenotrophomonas maltophilia (strain R551-3), this protein is GTPase Obg.